The chain runs to 386 residues: MNIHEYQGKELLRQYGVAVPNGKVAFSVDEAVEAAKELGSNVCVVKAQIHAGGRGKAGGVKVAKNLDEVRTYADEILGKTLVTHQTGPEGKEVKRLLIEEGCDIQKEYYVGLVLDRATSRVVMMASEEGGTEIEEVAEKTPEKIFKEIIDPVVGLQGFQARRLAFNINIPKELVGQAVKFMLGLYKVFVEKDCSIAEINPLVTTGDGKVMALDAKLNFDSNALYRQKAILEFRDLDEEDPKEIEASKYDLSYISLDGNIGCMVNGAGLAMATMDIIKHYNGEPANFLDVGGGATAEKVTEAFKIILSDESVKGIFVNIFGGIMKCDVIAEGVIQATKEVGLSIPLVVRLEGTNVDLGKKKLEESGLNITAADSMADGAQKIVSLVK.

The 236-residue stretch at 9–244 folds into the ATP-grasp domain; that stretch reads KELLRQYGVA…LDEEDPKEIE (236 aa). Residues Lys46, 53–55, Glu99, Cys102, and Glu107 contribute to the ATP site; that span reads GRG. Residues Asn199 and Asp213 each coordinate Mg(2+). Substrate is bound by residues Asn264 and 321–323; that span reads GIM.

Belongs to the succinate/malate CoA ligase beta subunit family. In terms of assembly, heterotetramer of two alpha and two beta subunits. It depends on Mg(2+) as a cofactor.

The catalysed reaction is succinate + ATP + CoA = succinyl-CoA + ADP + phosphate. It carries out the reaction GTP + succinate + CoA = succinyl-CoA + GDP + phosphate. The protein operates within carbohydrate metabolism; tricarboxylic acid cycle; succinate from succinyl-CoA (ligase route): step 1/1. Succinyl-CoA synthetase functions in the citric acid cycle (TCA), coupling the hydrolysis of succinyl-CoA to the synthesis of either ATP or GTP and thus represents the only step of substrate-level phosphorylation in the TCA. The beta subunit provides nucleotide specificity of the enzyme and binds the substrate succinate, while the binding sites for coenzyme A and phosphate are found in the alpha subunit. The sequence is that of Succinate--CoA ligase [ADP-forming] subunit beta from Halalkalibacterium halodurans (strain ATCC BAA-125 / DSM 18197 / FERM 7344 / JCM 9153 / C-125) (Bacillus halodurans).